Reading from the N-terminus, the 362-residue chain is NAC domain-containing protein 5 (362 aa).

The NAC domain maps to 3 to 151 (NPVGFRFRPT…TYTLCKVKFK (149 aa)). Residues 107–157 (IGEKRVLVFKNHGGSKSDWAMHEYHATFSSPNQIMTYTLCKVKFKGERREF) mediate DNA binding. The interval 240 to 266 (DDRNNHTPQKPLTGVFSDHSTDGSDSD) is disordered.

The protein localises to the nucleus. This chain is NAC domain-containing protein 5 (NAC005), found in Arabidopsis thaliana (Mouse-ear cress).